We begin with the raw amino-acid sequence, 371 residues long: N-acetyldiaminopimelate deacetylase (371 aa).

D68 is an active-site residue. The active-site Proton acceptor is E127.

Belongs to the peptidase M20A family. N-acetyldiaminopimelate deacetylase subfamily.

The enzyme catalyses N-acetyl-(2S,6S)-2,6-diaminopimelate + H2O = (2S,6S)-2,6-diaminopimelate + acetate. The protein operates within amino-acid biosynthesis; L-lysine biosynthesis via DAP pathway; LL-2,6-diaminopimelate from (S)-tetrahydrodipicolinate (acetylase route): step 3/3. Functionally, catalyzes the conversion of N-acetyl-diaminopimelate to diaminopimelate and acetate. This Listeria innocua serovar 6a (strain ATCC BAA-680 / CLIP 11262) protein is N-acetyldiaminopimelate deacetylase.